The following is a 265-amino-acid chain: uncharacterized protein (265 aa).

Residues M1–L20 form the signal peptide. The helical transmembrane segment at I192–L212 threads the bilayer.

The protein localises to the membrane. This is an uncharacterized protein from Homo sapiens (Human).